Consider the following 75-residue polypeptide: MTVIRLTRMGRNKKPFYRIVVTDSRKRRDSGWIESIGYFNPVVEPKVLKIDEERYNYWLSVGAKPSEKVKKLASK.

This sequence belongs to the bacterial ribosomal protein bS16 family.

The sequence is that of Small ribosomal subunit protein bS16 from Aliarcobacter butzleri (strain RM4018) (Arcobacter butzleri).